A 342-amino-acid chain; its full sequence is 6-hydroxytryprostatin B O-methyltransferase (342 aa).

Asp201 serves as a coordination point for S-adenosyl-L-methionine. Residue His244 is the Proton acceptor of the active site.

This sequence belongs to the class I-like SAM-binding methyltransferase superfamily. Cation-independent O-methyltransferase family. As to quaternary structure, homodimer.

The enzyme catalyses 6-hydroxytryprostatin B + S-adenosyl-L-methionine = tryprostatin A + S-adenosyl-L-homocysteine + H(+). It participates in alkaloid biosynthesis. Its function is as follows. 6-hydroxytryprostatin B O-methyltransferase; part of the gene cluster that mediates the biosynthesis of fumitremorgins, indole alkaloids that carry not only intriguing chemical structures, but also interesting biological and pharmacological activities. The biosynthesis of fumitremorgin-type alkaloids begins by condensation of the two amino acids L-tryptophan and L-proline to brevianamide F, catalyzed by the non-ribosomal peptide synthetase ftmA. Brevianamide F is then prenylated by the prenyltransferase ftmPT1/ftmB in the presence of dimethylallyl diphosphate, resulting in the formation of tryprostatin B. The three cytochrome P450 monooxygenases, ftmP450-1/ftmC, ftmP450-2/ftmE and ftmP450-3/FtmG, are responsible for the conversion of tryprostatin B to 6-hydroxytryprostatin B, tryprostatin A to fumitremorgin C and fumitremorgin C to 12,13-dihydroxyfumitremorgin C, respectively. The putative methyltransferase ftmMT/ftmD is expected for the conversion of 6-hydroxytryprostatin B to tryprostatin A. FtmPT2/FtmH catalyzes the prenylation of 12,13-dihydroxyfumitre-morgin C in the presence of dimethylallyl diphosphate, resulting in the formation of fumitremorgin B. Fumitremorgin B is further converted to verruculogen by ftmOx1/ftmF via the insertion of an endoperoxide bond between the two prenyl moieties. In some fungal species, verruculogen is further converted to fumitremorgin A, but the enzymes involved in this step have not been identified yet. The protein is 6-hydroxytryprostatin B O-methyltransferase of Aspergillus fumigatus (Neosartorya fumigata).